A 402-amino-acid polypeptide reads, in one-letter code: CinA-like protein (402 aa).

Belongs to the CinA family.

The polypeptide is CinA-like protein (Escherichia coli O17:K52:H18 (strain UMN026 / ExPEC)).